The primary structure comprises 398 residues: tRNA-specific 2-thiouridylase MnmA (398 aa).

Residues 19 to 26 (AMSGGVDS) and Leu45 each bind ATP. Catalysis depends on Cys113, which acts as the Nucleophile. A disulfide bond links Cys113 and Cys210. Residue Gly137 participates in ATP binding. The interval 160–162 (RDQ) is interaction with tRNA. The Cysteine persulfide intermediate role is filled by Cys210.

This sequence belongs to the MnmA/TRMU family.

It localises to the cytoplasm. The catalysed reaction is S-sulfanyl-L-cysteinyl-[protein] + uridine(34) in tRNA + AH2 + ATP = 2-thiouridine(34) in tRNA + L-cysteinyl-[protein] + A + AMP + diphosphate + H(+). Its function is as follows. Catalyzes the 2-thiolation of uridine at the wobble position (U34) of tRNA, leading to the formation of s(2)U34. In Rhodopseudomonas palustris (strain HaA2), this protein is tRNA-specific 2-thiouridylase MnmA.